We begin with the raw amino-acid sequence, 307 residues long: Acyl transferase (307 aa).

Catalysis depends on charge relay system residues serine 116, aspartate 213, and histidine 243.

The protein belongs to the LuxD family.

The protein operates within lipid metabolism; fatty acid reduction for biolumincescence. In terms of biological role, acyl transferase is part of the fatty acid reductase system required for aldehyde biosynthesis; it produces fatty acids for the luminescent reaction. This Aliivibrio fischeri (Vibrio fischeri) protein is Acyl transferase.